The primary structure comprises 769 residues: Probable beta-glucosidase M (769 aa).

A signal peptide spans 1-22 (MHSNLGLAGLAGLLATASVCLS). Residues N28, N75, and N262 are each glycosylated (N-linked (GlcNAc...) asparagine). The active site involves D290. N318, N325, N437, and N546 each carry an N-linked (GlcNAc...) asparagine glycan.

This sequence belongs to the glycosyl hydrolase 3 family.

It localises to the secreted. The catalysed reaction is Hydrolysis of terminal, non-reducing beta-D-glucosyl residues with release of beta-D-glucose.. Its pathway is glycan metabolism; cellulose degradation. Beta-glucosidases are one of a number of cellulolytic enzymes involved in the degradation of cellulosic biomass. Catalyzes the last step releasing glucose from the inhibitory cellobiose. This Neosartorya fischeri (strain ATCC 1020 / DSM 3700 / CBS 544.65 / FGSC A1164 / JCM 1740 / NRRL 181 / WB 181) (Aspergillus fischerianus) protein is Probable beta-glucosidase M (bglM).